A 250-amino-acid chain; its full sequence is Eukaryotic translation initiation factor 3 subunit K (250 aa).

Residues 46 to 229 (FDCYANLALL…KENEARSEVK (184 aa)) enclose the PCI domain.

This sequence belongs to the eIF-3 subunit K family. Component of the eukaryotic translation initiation factor 3 (eIF-3) complex.

It is found in the cytoplasm. Its function is as follows. Component of the eukaryotic translation initiation factor 3 (eIF-3) complex, which is involved in protein synthesis of a specialized repertoire of mRNAs and, together with other initiation factors, stimulates binding of mRNA and methionyl-tRNAi to the 40S ribosome. The eIF-3 complex specifically targets and initiates translation of a subset of mRNAs involved in cell proliferation. The polypeptide is Eukaryotic translation initiation factor 3 subunit K (Emericella nidulans (strain FGSC A4 / ATCC 38163 / CBS 112.46 / NRRL 194 / M139) (Aspergillus nidulans)).